The primary structure comprises 21 residues: Cytoplasmic filament protein A (21 aa).

The interval 1–21 is disordered; that stretch reads AILELPQSPNVFHPEKPSAVG.

Its subcellular location is the cytoplasm. Component of the cytoplasmic filaments that run the length of the organism just underneath the cytoplasmic membrane. This Treponema phagedenis protein is Cytoplasmic filament protein A (cfpA).